A 144-amino-acid polypeptide reads, in one-letter code: Catabolic 3-dehydroquinase (144 aa).

Residue Tyr24 is the Proton acceptor of the active site. Residues Asn76, His82, and Asp89 each contribute to the substrate site. The active-site Proton donor is the His102. Residues 103–104 (IT) and Arg113 contribute to the substrate site.

It belongs to the type-II 3-dehydroquinase family. As to quaternary structure, homododecamer. Adopts a ring-like structure, composed of an arrangement of two hexameric rings stacked on top of one another.

It carries out the reaction 3-dehydroquinate = 3-dehydroshikimate + H2O. The protein operates within aromatic compound metabolism; 3,4-dihydroxybenzoate biosynthesis; 3,4-dihydroxybenzoate from 3-dehydroquinate: step 1/2. In terms of biological role, is involved in the catabolism of quinate. Allows the utilization of quinate as carbon source via the beta-ketoadipate pathway. The protein is Catabolic 3-dehydroquinase of Debaryomyces hansenii (strain ATCC 36239 / CBS 767 / BCRC 21394 / JCM 1990 / NBRC 0083 / IGC 2968) (Yeast).